The chain runs to 378 residues: Cytochrome b (378 aa).

The next 4 helical transmembrane spans lie at 33–53, 77–98, 113–133, and 178–198; these read FGSL…FLAM, WLIR…YLHI, WNTG…GYVL, and FFAF…LHFL. The heme b site is built by His83 and His97. 2 residues coordinate heme b: His182 and His196. His201 serves as a coordination point for a ubiquinone. 4 helical membrane-spanning segments follow: residues 226-246, 288-308, 320-340, and 347-367; these read YKDL…AVFS, LGGV…PFLH, WSQL…WIGG, and LTTV…FLMP.

This sequence belongs to the cytochrome b family. The cytochrome bc1 complex contains 3 respiratory subunits (MT-CYB, CYC1 and UQCRFS1), 2 core proteins (UQCRC1 and UQCRC2) and probably 6 low-molecular weight proteins. The cofactor is heme b.

The protein resides in the mitochondrion inner membrane. Functionally, component of the ubiquinol-cytochrome c reductase complex (complex III or cytochrome b-c1 complex) that is part of the mitochondrial respiratory chain. The b-c1 complex mediates electron transfer from ubiquinol to cytochrome c. Contributes to the generation of a proton gradient across the mitochondrial membrane that is then used for ATP synthesis. In Indostomus paradoxus (Armoured stickleback), this protein is Cytochrome b (mt-cyb).